Here is a 208-residue protein sequence, read N- to C-terminus: Uracil phosphoribosyltransferase (208 aa).

5-phospho-alpha-D-ribose 1-diphosphate is bound by residues Arg78, Arg103, and 130–138 (DPMLATGHS). Uracil is bound by residues Ile193 and 198-200 (GDA). Asp199 contributes to the 5-phospho-alpha-D-ribose 1-diphosphate binding site.

Belongs to the UPRTase family. The cofactor is Mg(2+).

It carries out the reaction UMP + diphosphate = 5-phospho-alpha-D-ribose 1-diphosphate + uracil. It participates in pyrimidine metabolism; UMP biosynthesis via salvage pathway; UMP from uracil: step 1/1. With respect to regulation, allosterically activated by GTP. Functionally, catalyzes the conversion of uracil and 5-phospho-alpha-D-ribose 1-diphosphate (PRPP) to UMP and diphosphate. The polypeptide is Uracil phosphoribosyltransferase (Brucella anthropi (strain ATCC 49188 / DSM 6882 / CCUG 24695 / JCM 21032 / LMG 3331 / NBRC 15819 / NCTC 12168 / Alc 37) (Ochrobactrum anthropi)).